Reading from the N-terminus, the 430-residue chain is Adenylosuccinate synthetase (430 aa).

GTP contacts are provided by residues 12-18 (GDEGKGK) and 40-42 (GHT). Asp13 acts as the Proton acceptor in catalysis. 2 residues coordinate Mg(2+): Asp13 and Gly40. IMP is bound by residues 13-16 (DEGK), 38-41 (NAGH), Thr130, Arg144, Gln224, Thr239, and Arg303. Catalysis depends on His41, which acts as the Proton donor. 299-305 (TNTGRAR) lines the substrate pocket. GTP-binding positions include Arg305, 331-333 (KLD), and 413-415 (STS).

The protein belongs to the adenylosuccinate synthetase family. In terms of assembly, homodimer. Mg(2+) serves as cofactor.

It is found in the cytoplasm. The enzyme catalyses IMP + L-aspartate + GTP = N(6)-(1,2-dicarboxyethyl)-AMP + GDP + phosphate + 2 H(+). It functions in the pathway purine metabolism; AMP biosynthesis via de novo pathway; AMP from IMP: step 1/2. Its function is as follows. Plays an important role in the de novo pathway of purine nucleotide biosynthesis. Catalyzes the first committed step in the biosynthesis of AMP from IMP. The polypeptide is Adenylosuccinate synthetase (Hyphomonas neptunium (strain ATCC 15444)).